We begin with the raw amino-acid sequence, 858 residues long: Elongation factor 2 (858 aa).

Residues 17-362 form the tr-type G domain; the sequence is ANIRNMSVIA…MITIHLPSPV (346 aa). 26 to 33 is a binding site for GTP; the sequence is AHVDHGKS. Thr54 carries the phosphothreonine modification. Thr57 is modified (phosphothreonine; by EEF2K). Thr59 carries the phosphothreonine modification. The residue at position 152 (Lys152) is an N6-succinyllysine. GTP contacts are provided by residues 158-161 and 216-218; these read NKMD and SGL. Position 235 is an N6-acetyllysine (Lys235). N6-acetyllysine; alternate is present on Lys239. Lys239 participates in a covalent cross-link: Glycyl lysine isopeptide (Lys-Gly) (interchain with G-Cter in SUMO1); alternate. Tyr265 is modified (phosphotyrosine; by CSK). At Lys272 the chain carries N6-acetyllysine; alternate. Lys272 is subject to N6-succinyllysine; alternate. N6-acetyllysine is present on Lys275. Lys322 participates in a covalent cross-link: Glycyl lysine isopeptide (Lys-Gly) (interchain with G-Cter in SUMO). A Phosphoserine modification is found at Ser325. A Phosphotyrosine; by CSK modification is found at Tyr373. Thr435 bears the Phosphothreonine mark. 2 positions are modified to N6-acetyllysine: Lys439 and Lys445. At Ser502 the chain carries Phosphoserine. N6,N6,N6-trimethyllysine; by EEF2KMT is present on Lys525. Lys529 is covalently cross-linked (Glycyl lysine isopeptide (Lys-Gly) (interchain with G-Cter in SUMO)). Lys572 bears the N6-succinyllysine mark. The residue at position 595 (Ser595) is a Phosphoserine; by CDK2. Lys619 bears the N6-acetyllysine mark. The residue at position 715 (His715) is a Diphthamide.

It belongs to the TRAFAC class translation factor GTPase superfamily. Classic translation factor GTPase family. EF-G/EF-2 subfamily. Binds to 80S ribosomes. Actively translating ribosomes show mutually exclusive binding of eIF5a (EIF5A or EIF5A2) and EEF2/eEF2. Interacts with SERBP1; interaction sequesters EEF2/eEF2 at the A-site of the ribosome, thereby blocking the interaction sites of the mRNA-tRNA complex, promoting ribosome stabilization and hibernation. Interacts with HABP4; interaction takes place at the A-site of hibernating ribosomes and promotes ribosome stabilization. Component of the mRNA surveillance SURF complex, at least composed of ERF1, ERF3 (ERF3A or ERF3B), EEF2, UPF1/RENT1, SMG1, SMG8 and SMG9. Interacts with RBPMS2. Post-translationally, phosphorylation by EF-2 kinase completely inactivates EF-2; it requires prior phosphorylation by CDK2 at Ser-595 during mitotic prometaphase. Phosphorylation by CSK promotes SUMOylation, proteolytic cleavage, and nuclear translocation if the C-terminal fragment. Diphthamide is 2-[3-carboxyamido-3-(trimethyl-ammonio)propyl]histidine. In terms of processing, ISGylated. Post-translationally, proteolytically processed at two sites following phosphorylation by CSK. SUMOylated following phosphorylation by CSK, promotes proteolytic cleavage.

Its subcellular location is the cytoplasm. It is found in the nucleus. The catalysed reaction is GTP + H2O = GDP + phosphate + H(+). In terms of biological role, catalyzes the GTP-dependent ribosomal translocation step during translation elongation. During this step, the ribosome changes from the pre-translocational (PRE) to the post-translocational (POST) state as the newly formed A-site-bound peptidyl-tRNA and P-site-bound deacylated tRNA move to the P and E sites, respectively. Catalyzes the coordinated movement of the two tRNA molecules, the mRNA and conformational changes in the ribosome. The chain is Elongation factor 2 (Eef2) from Mus musculus (Mouse).